Consider the following 248-residue polypeptide: 5'-nucleotidase SurE (248 aa).

A divalent metal cation is bound by residues Asp8, Asp9, Ser39, and Asn91.

It belongs to the SurE nucleotidase family. It depends on a divalent metal cation as a cofactor.

Its subcellular location is the cytoplasm. It carries out the reaction a ribonucleoside 5'-phosphate + H2O = a ribonucleoside + phosphate. In terms of biological role, nucleotidase that shows phosphatase activity on nucleoside 5'-monophosphates. This chain is 5'-nucleotidase SurE, found in Geotalea uraniireducens (strain Rf4) (Geobacter uraniireducens).